The primary structure comprises 203 residues: Thymidylate kinase (203 aa).

14-21 (GGEGSGKS) is a binding site for ATP.

The protein belongs to the thymidylate kinase family.

It carries out the reaction dTMP + ATP = dTDP + ADP. Functionally, phosphorylation of dTMP to form dTDP in both de novo and salvage pathways of dTTP synthesis. The chain is Thymidylate kinase from Rickettsia canadensis (strain McKiel).